A 383-amino-acid chain; its full sequence is Queuine tRNA-ribosyltransferase (383 aa).

Asp95 serves as the catalytic Proton acceptor. Residues 95 to 99 (DSGGF), Asp149, Gln195, and Gly222 each bind substrate. Residues 253-259 (GVGSPDS) form an RNA binding region. Asp272 functions as the Nucleophile in the catalytic mechanism. The segment at 277–281 (TRIAR) is RNA binding; important for wobble base 34 recognition. Cys310, Cys312, Cys315, and His341 together coordinate Zn(2+).

It belongs to the queuine tRNA-ribosyltransferase family. In terms of assembly, homodimer. Within each dimer, one monomer is responsible for RNA recognition and catalysis, while the other monomer binds to the replacement base PreQ1. It depends on Zn(2+) as a cofactor.

The catalysed reaction is 7-aminomethyl-7-carbaguanine + guanosine(34) in tRNA = 7-aminomethyl-7-carbaguanosine(34) in tRNA + guanine. It functions in the pathway tRNA modification; tRNA-queuosine biosynthesis. In terms of biological role, catalyzes the base-exchange of a guanine (G) residue with the queuine precursor 7-aminomethyl-7-deazaguanine (PreQ1) at position 34 (anticodon wobble position) in tRNAs with GU(N) anticodons (tRNA-Asp, -Asn, -His and -Tyr). Catalysis occurs through a double-displacement mechanism. The nucleophile active site attacks the C1' of nucleotide 34 to detach the guanine base from the RNA, forming a covalent enzyme-RNA intermediate. The proton acceptor active site deprotonates the incoming PreQ1, allowing a nucleophilic attack on the C1' of the ribose to form the product. After dissociation, two additional enzymatic reactions on the tRNA convert PreQ1 to queuine (Q), resulting in the hypermodified nucleoside queuosine (7-(((4,5-cis-dihydroxy-2-cyclopenten-1-yl)amino)methyl)-7-deazaguanosine). The polypeptide is Queuine tRNA-ribosyltransferase (Shouchella clausii (strain KSM-K16) (Alkalihalobacillus clausii)).